A 319-amino-acid chain; its full sequence is uncharacterized protein (319 aa).

The region spanning 29–164 (VNISSLALLK…LDAFRSVNPL (136 aa)) is the MPN domain. Residues His-111, His-113, and Asp-124 each contribute to the Zn(2+) site. The JAMM motif motif lies at 111–124 (HSHPGFGCWLSSVD).

The protein belongs to the peptidase M67A family.

This is an uncharacterized protein from Caenorhabditis elegans.